The primary structure comprises 247 residues: Small ribosomal subunit protein uS2 (247 aa).

The protein belongs to the universal ribosomal protein uS2 family.

The polypeptide is Small ribosomal subunit protein uS2 (Pseudomonas savastanoi pv. phaseolicola (strain 1448A / Race 6) (Pseudomonas syringae pv. phaseolicola (strain 1448A / Race 6))).